The chain runs to 875 residues: Alanine--tRNA ligase (875 aa).

Residues His-567, His-571, Cys-669, and His-673 each coordinate Zn(2+).

This sequence belongs to the class-II aminoacyl-tRNA synthetase family. Zn(2+) serves as cofactor.

Its subcellular location is the cytoplasm. The catalysed reaction is tRNA(Ala) + L-alanine + ATP = L-alanyl-tRNA(Ala) + AMP + diphosphate. Its function is as follows. Catalyzes the attachment of alanine to tRNA(Ala) in a two-step reaction: alanine is first activated by ATP to form Ala-AMP and then transferred to the acceptor end of tRNA(Ala). Also edits incorrectly charged Ser-tRNA(Ala) and Gly-tRNA(Ala) via its editing domain. The polypeptide is Alanine--tRNA ligase (Geobacter sulfurreducens (strain ATCC 51573 / DSM 12127 / PCA)).